A 231-amino-acid chain; its full sequence is Flagellar L-ring protein (231 aa).

Residues Met-1–Gly-18 form the signal peptide. A lipid anchor (N-palmitoyl cysteine) is attached at Cys-19. The S-diacylglycerol cysteine moiety is linked to residue Cys-19.

The protein belongs to the FlgH family. As to quaternary structure, the basal body constitutes a major portion of the flagellar organelle and consists of four rings (L,P,S, and M) mounted on a central rod.

It is found in the cell outer membrane. It localises to the bacterial flagellum basal body. In terms of biological role, assembles around the rod to form the L-ring and probably protects the motor/basal body from shearing forces during rotation. The polypeptide is Flagellar L-ring protein (Stutzerimonas stutzeri (strain A1501) (Pseudomonas stutzeri)).